The primary structure comprises 344 residues: Dihydroorotase (344 aa).

The Zn(2+) site is built by His-13 and His-15. Residues 15-17 and Asn-41 contribute to the substrate site; that span reads HLR. Residues Lys-99, His-136, and His-174 each coordinate Zn(2+). Lys-99 is subject to N6-carboxylysine. His-136 serves as a coordination point for substrate. Leu-219 serves as a coordination point for substrate. Residue Asp-247 participates in Zn(2+) binding. Asp-247 is a catalytic residue. Substrate is bound by residues His-251 and Ala-263.

The protein belongs to the metallo-dependent hydrolases superfamily. DHOase family. Class II DHOase subfamily. As to quaternary structure, homodimer. It depends on Zn(2+) as a cofactor.

The enzyme catalyses (S)-dihydroorotate + H2O = N-carbamoyl-L-aspartate + H(+). It functions in the pathway pyrimidine metabolism; UMP biosynthesis via de novo pathway; (S)-dihydroorotate from bicarbonate: step 3/3. Catalyzes the reversible cyclization of carbamoyl aspartate to dihydroorotate. The chain is Dihydroorotase from Shewanella denitrificans (strain OS217 / ATCC BAA-1090 / DSM 15013).